The primary structure comprises 51 residues: uncharacterized protein (51 aa).

Positions 3-30 form a coiled coil; sequence EEKAVSLAKEIIELDIKRDEMLETFMQL.

This is an uncharacterized protein from Bacillus subtilis (strain 168).